Reading from the N-terminus, the 210-residue chain is Cytochrome c biogenesis ATP-binding export protein CcmA (210 aa).

In terms of domain architecture, ABC transporter spans 4-207; that stretch reads LAVRDLAVAR…RQSRPAGFNE (204 aa). Residue 36–43 coordinates ATP; that stretch reads GPNGIGKT.

This sequence belongs to the ABC transporter superfamily. CcmA exporter (TC 3.A.1.107) family. In terms of assembly, the complex is composed of two ATP-binding proteins (CcmA) and two transmembrane proteins (CcmB).

It localises to the cell inner membrane. It catalyses the reaction heme b(in) + ATP + H2O = heme b(out) + ADP + phosphate + H(+). Part of the ABC transporter complex CcmAB involved in the biogenesis of c-type cytochromes; once thought to export heme, this seems not to be the case, but its exact role is uncertain. Responsible for energy coupling to the transport system. The protein is Cytochrome c biogenesis ATP-binding export protein CcmA of Paracoccus denitrificans (strain Pd 1222).